Here is a 347-residue protein sequence, read N- to C-terminus: Globoside alpha-1,3-N-acetylgalactosaminyltransferase 1 (347 aa).

At 1 to 5 (MRCRR) the chain is on the cytoplasmic side. Residues 6-26 (LALGLGFSLLSGIALWSLWIY) traverse the membrane as a helical; Signal-anchor for type II membrane protein segment. The Lumenal portion of the chain corresponds to 27 to 347 (METWLPFSYV…LDKATSWLRS (321 aa)). Residue Asn108 is glycosylated (N-linked (GlcNAc...) asparagine). Substrate-binding positions include 116 to 121 (FAVGKY), 206 to 208 (DVD), and 228 to 231 (HPGY). Residues Asp206 and Asp208 each coordinate Mn(2+). The active-site Nucleophile is Glu298.

It belongs to the glycosyltransferase 6 family. The cofactor is Mn(2+).

Its subcellular location is the golgi apparatus membrane. It catalyses the reaction a globoside Gb4Cer (d18:1(4E)) + UDP-N-acetyl-alpha-D-galactosamine = a globoside Forssman (d18:1(4E)) + UDP + H(+). The catalysed reaction is a globoside Gb4Cer + UDP-N-acetyl-alpha-D-galactosamine = a globoside IV3GalNAc-Gb4Cer + UDP + H(+). It participates in protein modification; protein glycosylation. Catalyzes the formation of Forssman glycolipid via the addition of N-acetylgalactosamine (GalNAc) in alpha-1,3-linkage to GalNAcb-1,3Gala-1,4Galb-1,4GlcCer (Gb4Cer). Forssman glycolipid (also called Forssman antigen; FG) probably serves for adherence of some pathogens such as E.coli uropathogenic strains. The sequence is that of Globoside alpha-1,3-N-acetylgalactosaminyltransferase 1 from Canis lupus familiaris (Dog).